The chain runs to 132 residues: Small ribosomal subunit protein uS9 (132 aa).

The interval 101–132 is disordered; it reads KRAGLLTRDPRMKERKKPGLKAARRSPQFSKR. Over residues 113 to 132 the composition is skewed to basic residues; it reads KERKKPGLKAARRSPQFSKR.

The protein belongs to the universal ribosomal protein uS9 family.

The chain is Small ribosomal subunit protein uS9 from Staphylococcus aureus (strain USA300).